The chain runs to 121 residues: MLTKKEQRLRRARQTRIRIAQQGVARLTVNRTNLHIYASVISGDGSKVLASASTAEADVRKSLGGSGKGGNAAAAQIIGKRIAEKAKAAGVEKVAFDRAGFAYHGRVKALADAAREAGLQF.

This sequence belongs to the universal ribosomal protein uL18 family. In terms of assembly, part of the 50S ribosomal subunit; part of the 5S rRNA/L5/L18/L25 subcomplex. Contacts the 5S and 23S rRNAs.

This is one of the proteins that bind and probably mediate the attachment of the 5S RNA into the large ribosomal subunit, where it forms part of the central protuberance. In Acidovorax ebreus (strain TPSY) (Diaphorobacter sp. (strain TPSY)), this protein is Large ribosomal subunit protein uL18.